Consider the following 62-residue polypeptide: Keratin-associated protein 8-1 (62 aa).

Positions 12–53 are 12 X 2 AA repeats of G-[YCGS]; the sequence is GCYWGSYGYPLGYSVGCGYGSTYSPVGYGFGYGYNGSGAFGC.

The protein belongs to the KRTAP type 8 family. Interacts with wool keratins. Wool.

In the wool cortex, wool keratin intermediate filaments are embedded in an interfilamentous matrix, consisting of hair keratin-associated proteins (KRTAP), which are essential for the formation of a rigid and resistant wool shaft through their extensive disulfide bond cross-linking with abundant cysteine residues of wool keratins. The matrix proteins include the high-sulfur and high-glycine-tyrosine keratins. The chain is Keratin-associated protein 8-1 (KRTAP8-1) from Ovis aries (Sheep).